A 195-amino-acid polypeptide reads, in one-letter code: MILSDADIRRRLDEGDLAIEPLDDPELQVQPASVDLRLGREFLEFQRANISCIHPTSEREVDEYVDETYVEEGEEFVLHPGDFVLGTTKERVEIPPDLIAHVEGRSSLGRLAIVVHATAGLCDPGYQGQITLELSNLGTAPVALSPGMRISQLTFTELKSPAERPYGAERGSKYQGQTGPQASRIQGDREFGGDQ.

Residues Arg105–Arg110, Asp123, Thr131–Glu133, Gln152, Tyr166, Lys173, and Gln177 each bind dCTP. Catalysis depends on Glu133, which acts as the Proton donor/acceptor. Positions Lys159–Gln195 are disordered. Over residues Ser160 to Ser172 the composition is skewed to basic and acidic residues. A compositionally biased stretch (polar residues) spans Tyr174–Arg184. Basic and acidic residues predominate over residues Gln186 to Gln195.

It belongs to the dCTP deaminase family. As to quaternary structure, homotrimer.

It catalyses the reaction dCTP + H2O + H(+) = dUTP + NH4(+). Its pathway is pyrimidine metabolism; dUMP biosynthesis; dUMP from dCTP (dUTP route): step 1/2. In terms of biological role, catalyzes the deamination of dCTP to dUTP. The polypeptide is dCTP deaminase (Natronomonas pharaonis (strain ATCC 35678 / DSM 2160 / CIP 103997 / JCM 8858 / NBRC 14720 / NCIMB 2260 / Gabara) (Halobacterium pharaonis)).